Reading from the N-terminus, the 151-residue chain is MLVYGLYKSPLGYITVAKDDKGFIMLDFCDCVEGNSRDDSSFTEFFHKLDLYFEGKPINLREPINLKTYPFRLSVFKEVMRIPWGKVMTYKQIADSLGTSPRAVGMALSKNPILLIIPCHRVIAENGIGGYSRGVKLKRALLELEGVKIPE.

C119 acts as the Nucleophile; methyl group acceptor in catalysis.

The protein belongs to the MGMT family.

The protein localises to the cytoplasm. The enzyme catalyses a 6-O-methyl-2'-deoxyguanosine in DNA + L-cysteinyl-[protein] = S-methyl-L-cysteinyl-[protein] + a 2'-deoxyguanosine in DNA. The catalysed reaction is a 4-O-methyl-thymidine in DNA + L-cysteinyl-[protein] = a thymidine in DNA + S-methyl-L-cysteinyl-[protein]. Functionally, involved in the cellular defense against the biological effects of O6-methylguanine (O6-MeG) and O4-methylthymine (O4-MeT) in DNA. Repairs the methylated nucleobase in DNA by stoichiometrically transferring the methyl group to a cysteine residue in the enzyme. This is a suicide reaction: the enzyme is irreversibly inactivated. This Saccharolobus islandicus (strain M.16.27) (Sulfolobus islandicus) protein is Methylated-DNA--protein-cysteine methyltransferase.